A 359-amino-acid polypeptide reads, in one-letter code: Dual-specificity RNA methyltransferase RlmN (359 aa).

The active-site Proton acceptor is glutamate 98. One can recognise a Radical SAM core domain in the interval 104-329 (EPKRGTLCIS…LEHGLTATIR (226 aa)). Cysteine 111 and cysteine 340 are joined by a disulfide. [4Fe-4S] cluster contacts are provided by cysteine 118, cysteine 122, and cysteine 125. Residues 166-167 (GE), serine 198, 220-222 (SLH), and asparagine 297 contribute to the S-adenosyl-L-methionine site. Cysteine 340 functions as the S-methylcysteine intermediate in the catalytic mechanism.

It belongs to the radical SAM superfamily. RlmN family. The cofactor is [4Fe-4S] cluster.

Its subcellular location is the cytoplasm. The catalysed reaction is adenosine(2503) in 23S rRNA + 2 reduced [2Fe-2S]-[ferredoxin] + 2 S-adenosyl-L-methionine = 2-methyladenosine(2503) in 23S rRNA + 5'-deoxyadenosine + L-methionine + 2 oxidized [2Fe-2S]-[ferredoxin] + S-adenosyl-L-homocysteine. It catalyses the reaction adenosine(37) in tRNA + 2 reduced [2Fe-2S]-[ferredoxin] + 2 S-adenosyl-L-methionine = 2-methyladenosine(37) in tRNA + 5'-deoxyadenosine + L-methionine + 2 oxidized [2Fe-2S]-[ferredoxin] + S-adenosyl-L-homocysteine. In terms of biological role, specifically methylates position 2 of adenine 2503 in 23S rRNA and position 2 of adenine 37 in tRNAs. m2A2503 modification seems to play a crucial role in the proofreading step occurring at the peptidyl transferase center and thus would serve to optimize ribosomal fidelity. The polypeptide is Dual-specificity RNA methyltransferase RlmN (Halorhodospira halophila (strain DSM 244 / SL1) (Ectothiorhodospira halophila (strain DSM 244 / SL1))).